We begin with the raw amino-acid sequence, 296 residues long: Pyridoxine/pyridoxal/pyridoxamine kinase (296 aa).

Residues Ser23 and His59 each coordinate substrate. Asp125 provides a ligand contact to ATP. Tyr136 serves as a coordination point for Mg(2+). Residues Thr157, Glu162, Thr195, 222–225 (HQRV), and Thr232 each bind ATP. Glu162 is a Mg(2+) binding site. Asp234 contributes to the substrate binding site.

It belongs to the pyridoxine kinase family. PdxK subfamily. In terms of assembly, homodimer. Mg(2+) serves as cofactor.

The catalysed reaction is pyridoxal + ATP = pyridoxal 5'-phosphate + ADP + H(+). The enzyme catalyses pyridoxine + ATP = pyridoxine 5'-phosphate + ADP + H(+). It carries out the reaction pyridoxamine + ATP = pyridoxamine 5'-phosphate + ADP + H(+). Its pathway is cofactor metabolism; pyridoxal 5'-phosphate salvage; pyridoxal 5'-phosphate from pyridoxal: step 1/1. The protein operates within cofactor metabolism; pyridoxal 5'-phosphate salvage; pyridoxine 5'-phosphate from pyridoxine: step 1/1. It functions in the pathway cofactor metabolism; pyridoxal 5'-phosphate salvage; pyridoxamine 5'-phosphate from pyridoxamine: step 1/1. Functionally, B6-vitamer kinase involved in the salvage pathway of pyridoxal 5'-phosphate (PLP). Catalyzes the phosphorylation of pyridoxine (PN), pyridoxal (PL), and pyridoxamine (PM), forming their respective 5'-phosphorylated esters, i.e. PNP, PLP and PMP. This is Pyridoxine/pyridoxal/pyridoxamine kinase from Bordetella avium (strain 197N).